The primary structure comprises 487 residues: GTPase Der (487 aa).

EngA-type G domains are found at residues 3 to 167 and 203 to 378; these read FTLA…EGFA and LQIA…DIWN. GTP-binding positions include 9 to 16, 56 to 60, 119 to 122, 209 to 216, 256 to 260, and 321 to 324; these read GRPNVGKS, DTAGL, NKAE, GRPNAGKS, DTAGM, and NKWD. One can recognise a KH-like domain in the interval 379-463; that stretch reads RRITTARLNT…PIRLTMRGQG (85 aa). The disordered stretch occupies residues 451–487; sequence PGTPIRLTMRGQGDKNPFKERKFRTPSRLRKHLGKKD. Basic residues predominate over residues 471–487; the sequence is RKFRTPSRLRKHLGKKD.

It belongs to the TRAFAC class TrmE-Era-EngA-EngB-Septin-like GTPase superfamily. EngA (Der) GTPase family. In terms of assembly, associates with the 50S ribosomal subunit.

GTPase that plays an essential role in the late steps of ribosome biogenesis. The sequence is that of GTPase Der from Cereibacter sphaeroides (strain ATCC 17029 / ATH 2.4.9) (Rhodobacter sphaeroides).